Reading from the N-terminus, the 193-residue chain is ATP-dependent Clp protease proteolytic subunit (193 aa).

The active-site Nucleophile is the S98. Residue H123 is part of the active site.

Belongs to the peptidase S14 family. In terms of assembly, fourteen ClpP subunits assemble into 2 heptameric rings which stack back to back to give a disk-like structure with a central cavity, resembling the structure of eukaryotic proteasomes.

The protein resides in the cytoplasm. The catalysed reaction is Hydrolysis of proteins to small peptides in the presence of ATP and magnesium. alpha-casein is the usual test substrate. In the absence of ATP, only oligopeptides shorter than five residues are hydrolyzed (such as succinyl-Leu-Tyr-|-NHMec, and Leu-Tyr-Leu-|-Tyr-Trp, in which cleavage of the -Tyr-|-Leu- and -Tyr-|-Trp bonds also occurs).. Its function is as follows. Cleaves peptides in various proteins in a process that requires ATP hydrolysis. Has a chymotrypsin-like activity. Plays a major role in the degradation of misfolded proteins. The polypeptide is ATP-dependent Clp protease proteolytic subunit (Pasteurella multocida (strain Pm70)).